Here is an 872-residue protein sequence, read N- to C-terminus: Alanine--tRNA ligase (872 aa).

Zn(2+) is bound by residues H567, H571, C669, and H673.

It belongs to the class-II aminoacyl-tRNA synthetase family. Requires Zn(2+) as cofactor.

It localises to the cytoplasm. It catalyses the reaction tRNA(Ala) + L-alanine + ATP = L-alanyl-tRNA(Ala) + AMP + diphosphate. Catalyzes the attachment of alanine to tRNA(Ala) in a two-step reaction: alanine is first activated by ATP to form Ala-AMP and then transferred to the acceptor end of tRNA(Ala). Also edits incorrectly charged Ser-tRNA(Ala) and Gly-tRNA(Ala) via its editing domain. The polypeptide is Alanine--tRNA ligase (Streptococcus thermophilus (strain ATCC BAA-491 / LMD-9)).